Consider the following 170-residue polypeptide: Large ribosomal subunit protein uL10 (170 aa).

It belongs to the universal ribosomal protein uL10 family. In terms of assembly, part of the ribosomal stalk of the 50S ribosomal subunit. The N-terminus interacts with L11 and the large rRNA to form the base of the stalk. The C-terminus forms an elongated spine to which L12 dimers bind in a sequential fashion forming a multimeric L10(L12)X complex.

In terms of biological role, forms part of the ribosomal stalk, playing a central role in the interaction of the ribosome with GTP-bound translation factors. The chain is Large ribosomal subunit protein uL10 from Lactobacillus helveticus (strain DPC 4571).